The following is a 311-amino-acid chain: Dehydrogenase/reductase SDR family member 7C (311 aa).

The N-terminal stretch at 1–18 (MGLMAVLMLPLLLLGISG) is a signal peptide. Ser47, Leu49, Tyr191, Lys195, and Ser226 together coordinate NAD(+). Tyr191 functions as the Proton acceptor in the catalytic mechanism.

It belongs to the short-chain dehydrogenases/reductases (SDR) family. In terms of tissue distribution, expressed in skeletal muscle and cardiac muscle. Also expressed in liver, kidney, adipocytes and skin.

It localises to the sarcoplasmic reticulum membrane. It carries out the reaction all-trans-retinol + NAD(+) = all-trans-retinal + NADH + H(+). NADH-dependent oxidoreductase which catalyzes the oxidation of all-trans-retinol to all-trans-retinal. Plays a role in the regulation of cardiac and skeletal muscle metabolic functions. Maintains Ca(2+) intracellular homeostasis by repressing Ca(2+) release from the sarcoplasmic reticulum (SR) in myotubes, possibly through local alternations in NAD/NADH or retinol/retinal. Also plays a role in Ca(2+) homeostasis by controlling Ca(2+) overload in the cytosol and the SR in myotubes. Involved in glucose uptake into skeletal muscles and muscle performance by activating PI3K and mTORC2-mediated AKT1 phosphorylation signaling pathways, possibly through the action of its downstream catalytic product all-trans-retinoic acid. This is Dehydrogenase/reductase SDR family member 7C from Mus musculus (Mouse).